Reading from the N-terminus, the 1009-residue chain is Glutamate receptor ionotropic, delta-1 (1009 aa).

A signal peptide spans 1 to 20 (MEALTLWLLPWICQCVTVRA). The interval 21 to 436 (DSIIHIGAIF…ERPMGSRLQG (416 aa)) is interaction with CBLN1. Topologically, residues 21-562 (DSIIHIGAIF…SIFSLFAPFD (542 aa)) are extracellular. 3 disulfides stabilise this stretch: Cys80–Cys351, Cys96–Cys128, and Cys294–Cys306. Asn131 and Asn200 each carry an N-linked (GlcNAc...) asparagine glycan. 2 N-linked (GlcNAc...) asparagine glycosylation sites follow: Asn422 and Asn498. Ca(2+) is bound by residues Glu527, Val530, and Asp531. Residues 563–583 (FAVWACIAAAIPVVGVLIFVL) traverse the membrane as a helical segment. Over 584–637 (NRIQAVRSQSATQPRPSASATLHSAIWIVYGAFVQQGGESSVNSVAMRIVMGSW) the chain is Cytoplasmic. The helical transmembrane segment at 638–658 (WLFTLIVCSSYTANLAAFLTV) threads the bilayer. Residues 659–830 (SRMDNPIRTF…TEGKSLKLHS (172 aa)) are Extracellular-facing. Ca(2+) contacts are provided by Asp753, Asp755, and Ser757. A helical transmembrane segment spans residues 831-851 (FAGVFCILAIGLLLACLVAAL). The Cytoplasmic portion of the chain corresponds to 852–1009 (ELWWNSNRCH…ALDTSHGTSI (158 aa)). A compositionally biased stretch (polar residues) spans 931-942 (LPEQSSHGTSRT). A disordered region spans residues 931 to 960 (LPEQSSHGTSRTLSSGPSSNLPLPLSSSAT). Low complexity predominate over residues 943–958 (LSSGPSSNLPLPLSSS).

It belongs to the glutamate-gated ion channel (TC 1.A.10.1) family. GRID1 subfamily. Homodimer. Interacts (via extracellular N-terminal domain) with CBLN1 (via C1q domain), and more weakly with CBLN2; the interactions mediate the trans-synaptic adhesion complexes also with neurexins and are required for ligand-gated cation channel activity. In terms of tissue distribution, equally in forebrain and cerebellum.

It is found in the postsynaptic cell membrane. The enzyme catalyses Ca(2+)(in) = Ca(2+)(out). It carries out the reaction Na(+)(in) = Na(+)(out). Functionally, member of the ionotropic glutamate receptor family, which plays a crucial role in synaptic organization and signal transduction in the central nervous system. Although it shares structural features with ionotropic glutamate receptors, does not bind glutamate as a primary ligand. Instead, forms trans-synaptic adhesion complexes with presynaptic neurexins and cerebellins, regulating NMDA and AMPA receptor activity and influencing synaptic plasticity through signal transduction. In the presence of NRX1B-CBLN1, forms cation-selective channels that are proposed to be gated by glycine and D-serine. However, recent research disputes this ligand-gated cation channel activity. Cation-selective ion channel can be triggered by GRM1 in dopaminergic neurons. Also acts as a receptor for GABA, modulating inhibitory synaptic plasticity through non-ionotropic mechanisms. The protein is Glutamate receptor ionotropic, delta-1 (Grid1) of Mus musculus (Mouse).